Here is an 89-residue protein sequence, read N- to C-terminus: GTP cyclohydrolase 1 feedback regulatory protein (89 aa).

This sequence belongs to the GFRP family. Homopentamer. Forms a complex with GCH1 where a GCH1 homodecamer is sandwiched by two GFRP homopentamers.

It is found in the nucleus. The protein resides in the nucleus membrane. Its subcellular location is the cytoplasm. The protein localises to the cytosol. Functionally, mediates tetrahydrobiopterin inhibition of GTP cyclohydrolase 1. The polypeptide is GTP cyclohydrolase 1 feedback regulatory protein (gchfr) (Danio rerio (Zebrafish)).